Consider the following 294-residue polypeptide: ADP-ribosyl-[dinitrogen reductase] glycohydrolase (294 aa).

ADP-D-ribose contacts are provided by residues 100–102, glutamate 121, histidine 158, and tyrosine 212; that span reads NTC. 3 residues coordinate Mn(2+): aspartate 243, aspartate 245, and threonine 246.

The protein belongs to the ADP-ribosylglycohydrolase family. In terms of assembly, monomer. Requires Mn(2+) as cofactor.

The protein localises to the cytoplasm. It catalyses the reaction N(omega)-alpha-(ADP-D-ribosyl)-L-arginyl-[dinitrogen reductase] + H2O = L-arginyl-[dinitrogen reductase] + ADP-D-ribose. Its function is as follows. Involved in the regulation of nitrogen fixation activity by the reversible ADP-ribosylation of one subunit of the homodimeric dinitrogenase reductase component of the nitrogenase enzyme complex. The ADP-ribosyltransferase (DraT) transfers the ADP-ribose group from NAD to dinitrogenase reductase. The ADP-ribose group is removed through the action of the ADP-ribosylglycohydrolase (DraG, this entry). The protein is ADP-ribosyl-[dinitrogen reductase] glycohydrolase of Rhodospirillum rubrum.